The sequence spans 285 residues: HTH-type transcriptional regulator MurR (285 aa).

Residues 1–77 (MLYLTKIRNA…MALIGEYSAS (77 aa)) form the HTH rpiR-type domain. Positions 37–56 (SRQMAKQLGISQSSIVKFAQ) form a DNA-binding region, H-T-H motif. The region spanning 128 to 268 (IIEVISKAPF…FVGLVQLNDV (141 aa)) is the SIS domain.

Homotetramer.

The protein operates within amino-sugar metabolism; N-acetylmuramate degradation [regulation]. Its function is as follows. Represses the expression of the murPQ operon involved in the uptake and degradation of N-acetylmuramic acid (MurNAc). Binds to two adjacent inverted repeats within the operator region. MurNAc 6-phosphate, the substrate of MurQ, is the specific inducer that weakens binding of MurR to the operator. The polypeptide is HTH-type transcriptional regulator MurR (Escherichia coli (strain ATCC 8739 / DSM 1576 / NBRC 3972 / NCIMB 8545 / WDCM 00012 / Crooks)).